The sequence spans 390 residues: Pyruvate dehydrogenase E1 component subunit alpha-1, mitochondrial (390 aa).

Residues 1–15 (MAAAILLRRVPPARA) constitute a mitochondrion transit peptide. Residues histidine 91, tyrosine 117, arginine 118, glycine 166, valine 168, aspartate 197, glycine 198, alanine 199, asparagine 226, and tyrosine 228 each contribute to the pyruvate site. Thiamine diphosphate is bound by residues tyrosine 117, arginine 118, glycine 166, valine 168, aspartate 197, glycine 198, alanine 199, and asparagine 226. Aspartate 197 contributes to the Mg(2+) binding site. Positions 226 and 228 each coordinate Mg(2+). Histidine 292 is a binding site for thiamine diphosphate. The disordered stretch occupies residues 293–312 (SMSDPGSTYRTRDEISGVRQ). Residues 302–312 (RTRDEISGVRQ) are compositionally biased toward basic and acidic residues.

Tetramer of 2 alpha and 2 beta subunits. The cofactor is thiamine diphosphate. Requires Mg(2+) as cofactor.

Its subcellular location is the mitochondrion matrix. It catalyses the reaction N(6)-[(R)-lipoyl]-L-lysyl-[protein] + pyruvate + H(+) = N(6)-[(R)-S(8)-acetyldihydrolipoyl]-L-lysyl-[protein] + CO2. Functionally, the pyruvate dehydrogenase complex catalyzes the overall conversion of pyruvate to acetyl-CoA and CO(2). It contains multiple copies of three enzymatic components: pyruvate dehydrogenase (E1), dihydrolipoamide acetyltransferase (E2) and lipoamide dehydrogenase (E3). The chain is Pyruvate dehydrogenase E1 component subunit alpha-1, mitochondrial from Oryza sativa subsp. japonica (Rice).